A 72-amino-acid polypeptide reads, in one-letter code: Metallothionein-like protein 1 (72 aa).

Belongs to the metallothionein superfamily. Type 15 family.

Metallothioneins have a high content of cysteine residues that bind various heavy metals. In Erythranthe guttata (Yellow monkey flower), this protein is Metallothionein-like protein 1.